Consider the following 157-residue polypeptide: Protein Smg homolog (157 aa).

The protein belongs to the Smg family.

In Alkalilimnicola ehrlichii (strain ATCC BAA-1101 / DSM 17681 / MLHE-1), this protein is Protein Smg homolog.